The chain runs to 301 residues: Homoserine O-acetyltransferase (301 aa).

The Acyl-thioester intermediate role is filled by C142. K163 and S192 together coordinate substrate. The active-site Proton acceptor is H235. E237 is an active-site residue. Residue R249 participates in substrate binding.

Belongs to the MetA family.

It is found in the cytoplasm. It carries out the reaction L-homoserine + acetyl-CoA = O-acetyl-L-homoserine + CoA. The protein operates within amino-acid biosynthesis; L-methionine biosynthesis via de novo pathway; O-acetyl-L-homoserine from L-homoserine: step 1/1. Functionally, transfers an acetyl group from acetyl-CoA to L-homoserine, forming acetyl-L-homoserine. In Clostridium acetobutylicum (strain ATCC 824 / DSM 792 / JCM 1419 / IAM 19013 / LMG 5710 / NBRC 13948 / NRRL B-527 / VKM B-1787 / 2291 / W), this protein is Homoserine O-acetyltransferase.